The sequence spans 373 residues: Anhydro-N-acetylmuramic acid kinase (373 aa).

Gly-12–Asp-19 provides a ligand contact to ATP.

This sequence belongs to the anhydro-N-acetylmuramic acid kinase family.

The catalysed reaction is 1,6-anhydro-N-acetyl-beta-muramate + ATP + H2O = N-acetyl-D-muramate 6-phosphate + ADP + H(+). It participates in amino-sugar metabolism; 1,6-anhydro-N-acetylmuramate degradation. Its pathway is cell wall biogenesis; peptidoglycan recycling. Its function is as follows. Catalyzes the specific phosphorylation of 1,6-anhydro-N-acetylmuramic acid (anhMurNAc) with the simultaneous cleavage of the 1,6-anhydro ring, generating MurNAc-6-P. Is required for the utilization of anhMurNAc either imported from the medium or derived from its own cell wall murein, and thus plays a role in cell wall recycling. This chain is Anhydro-N-acetylmuramic acid kinase, found in Salmonella newport (strain SL254).